The following is a 492-amino-acid chain: Bifunctional protein GlmU (492 aa).

Positions 1–241 (MTFRGDTAVL…NALVAGVNNR (241 aa)) are pyrophosphorylase. Residues 12–15 (LAAG), Lys26, Gln83, 88–89 (GT), 112–114 (SGD), Gly151, Glu166, Asn181, and Asn239 contribute to the UDP-N-acetyl-alpha-D-glucosamine site. Mg(2+) is bound at residue Asp114. Asn239 is a Mg(2+) binding site. Residues 242-262 (VQLAELSAELNRRIVATHQVA) form a linker region. An N-acetyltransferase region spans residues 263–492 (GVTIIDPATT…KQSQQKSEPD (230 aa)). Residues Arg344 and Lys362 each contribute to the UDP-N-acetyl-alpha-D-glucosamine site. Catalysis depends on His374, which acts as the Proton acceptor. Tyr377 and Asn388 together coordinate UDP-N-acetyl-alpha-D-glucosamine. Residues Ala391, 397 to 398 (NY), Ser416, and Ala434 contribute to the acetyl-CoA site. The segment at 461 to 492 (VQRKRPGSAAAQAAEKASTRTGKQSQQKSEPD) is disordered. Over residues 479–492 (TRTGKQSQQKSEPD) the composition is skewed to polar residues.

In the N-terminal section; belongs to the N-acetylglucosamine-1-phosphate uridyltransferase family. The protein in the C-terminal section; belongs to the transferase hexapeptide repeat family. Homotrimer. Mg(2+) is required as a cofactor.

The protein localises to the cytoplasm. It catalyses the reaction alpha-D-glucosamine 1-phosphate + acetyl-CoA = N-acetyl-alpha-D-glucosamine 1-phosphate + CoA + H(+). The catalysed reaction is N-acetyl-alpha-D-glucosamine 1-phosphate + UTP + H(+) = UDP-N-acetyl-alpha-D-glucosamine + diphosphate. It functions in the pathway nucleotide-sugar biosynthesis; UDP-N-acetyl-alpha-D-glucosamine biosynthesis; N-acetyl-alpha-D-glucosamine 1-phosphate from alpha-D-glucosamine 6-phosphate (route II): step 2/2. The protein operates within nucleotide-sugar biosynthesis; UDP-N-acetyl-alpha-D-glucosamine biosynthesis; UDP-N-acetyl-alpha-D-glucosamine from N-acetyl-alpha-D-glucosamine 1-phosphate: step 1/1. It participates in bacterial outer membrane biogenesis; LPS lipid A biosynthesis. Its function is as follows. Catalyzes the last two sequential reactions in the de novo biosynthetic pathway for UDP-N-acetylglucosamine (UDP-GlcNAc). The C-terminal domain catalyzes the transfer of acetyl group from acetyl coenzyme A to glucosamine-1-phosphate (GlcN-1-P) to produce N-acetylglucosamine-1-phosphate (GlcNAc-1-P), which is converted into UDP-GlcNAc by the transfer of uridine 5-monophosphate (from uridine 5-triphosphate), a reaction catalyzed by the N-terminal domain. In Mycobacterium leprae (strain Br4923), this protein is Bifunctional protein GlmU.